The sequence spans 249 residues: MITWLDPQDPFPPVERALGPASDAPGLLAASRDLSPQRLLLAYRQGIFPWYSEGQPVLWWSTDPRMVLAPHRLKISVSLRKTLRRILRDPDWEIRVDDDFVAVMQACAMTPRDGQLGTWITDDIVAAYGSLHRLGLAHSVETWYRGERVGGLYGVALGRMFYGESMFAHRTDASKIALAALCGFLERHGVTMIDCQQETDHLASLGAEPIPREQFIAHVRQTAAEANISPWRFDKSELTRWTSQASTEL.

The protein belongs to the L/F-transferase family.

It localises to the cytoplasm. It carries out the reaction N-terminal L-lysyl-[protein] + L-leucyl-tRNA(Leu) = N-terminal L-leucyl-L-lysyl-[protein] + tRNA(Leu) + H(+). The enzyme catalyses N-terminal L-arginyl-[protein] + L-leucyl-tRNA(Leu) = N-terminal L-leucyl-L-arginyl-[protein] + tRNA(Leu) + H(+). The catalysed reaction is L-phenylalanyl-tRNA(Phe) + an N-terminal L-alpha-aminoacyl-[protein] = an N-terminal L-phenylalanyl-L-alpha-aminoacyl-[protein] + tRNA(Phe). In terms of biological role, functions in the N-end rule pathway of protein degradation where it conjugates Leu, Phe and, less efficiently, Met from aminoacyl-tRNAs to the N-termini of proteins containing an N-terminal arginine or lysine. The chain is Leucyl/phenylalanyl-tRNA--protein transferase from Cupriavidus metallidurans (strain ATCC 43123 / DSM 2839 / NBRC 102507 / CH34) (Ralstonia metallidurans).